Here is an 856-residue protein sequence, read N- to C-terminus: MDNAAIASQSNTPPSNGRSSARFVTPISVHSSPITAEVIEPSSPFSPPSPSTLLTSLSKSPSHKISNLQMDGAKTTCLEVLQNSSLVVDSPKRQDKSITGSKAKPASTMRHGQRTASHKMATQTEIQTVDGDRLIVSPKTRKKKAATAKRTRKQDGVAERRLHGHVSKVKSPGDLKLDAKIPPSKPCDNKAPSVGDNTDNELERQTGGLQLEKATKRRLDWTPTKEGPIPMVDLAEVHSSSCGKSVIRTHSAGTLLSNYGFSGVVNTSLAPMPETCDNGPTTKRLMELQNFYSASGIQTPTESRPATNDSQSISSKQQRVKVKKPQKAKLTTLTSYVTAKYSVVDQTADLDRIETVNSGKNKKMGVTKRTSGTERANAARGKSDTLKNGNGPPVFKVVPPLEAFKSFDGQELLFGTSSQLEHGHSEDQDEEIQHTADSINKSNVVPRPAVSKGLGSSLFRLSSSKNLWSASSRDLTGAVLQVDEIDLSERSIEVSTPAAKYKRKTGIRDLSGQNVIDVEKDTRTLAANIDTRELDNMNEPSLAEDDLVYRENLESTNAKLNSQTPANISEAMLERPLPDKPIFGGFTTSELAKQVAAYGFKPIKSRDKMISLLEKCWENQSKSSKLEPKPNQRNHKSQGDDLAERQLLGLKPRSDSISFVNTRSPKKRLAKTSVKSQESKSFSLSNEGPRITSKLPMKRFVSPCAILIDDDQSSDSVGEALPLSPSHSSNGNGTLHHPQDCDEIHAPTTQMAIRSAKSSISVSSTTNLPSLSSQITKAVQSQPRIRAFKGLKQPTWYEKILMYDPIQLEDLAAWLNTGGFGLIGEDREVGAGVVREWCESKGICCVWKKQASAKSH.

Polar residues predominate over residues 1-19 (MDNAAIASQSNTPPSNGRS). Disordered regions lie at residues 1-24 (MDNAAIASQSNTPPSNGRSSARFV), 39-61 (IEPSSPFSPPSPSTLLTSLSKSP), 88-121 (VDSPKRQDKSITGSKAKPASTMRHGQRTASHKMA), 139-201 (KTRK…TDNE), 296-326 (GIQTPTESRPATNDSQSISSKQQRVKVKKPQ), 362-392 (KKMGVTKRTSGTERANAARGKSDTLKNGNGP), 621-640 (SKSSKLEPKPNQRNHKSQGD), 653-688 (RSDSISFVNTRSPKKRLAKTSVKSQESKSFSLSNEG), and 715-742 (DSVGEALPLSPSHSSNGNGTLHHPQDCD). Low complexity predominate over residues 51-60 (STLLTSLSKS). Residues 139–152 (KTRKKKAATAKRTR) are compositionally biased toward basic residues. Residues 296 to 309 (GIQTPTESRPATND) show a composition bias toward polar residues. Residues 673–686 (SVKSQESKSFSLSN) show a composition bias toward polar residues.

It belongs to the SLX4 family. Forms a heterodimer with SLX1. Phosphorylated in response to DNA damage.

It is found in the nucleus. Regulatory subunit of the SLX1-SLX4 structure-specific endonuclease that resolves DNA secondary structures generated during DNA repair and recombination. Has endonuclease activity towards branched DNA substrates, introducing single-strand cuts in duplex DNA close to junctions with ss-DNA. This chain is Structure-specific endonuclease subunit SLX4, found in Ajellomyces dermatitidis (strain ER-3 / ATCC MYA-2586) (Blastomyces dermatitidis).